Here is a 296-residue protein sequence, read N- to C-terminus: Ribosomal RNA small subunit methyltransferase H (296 aa).

S-adenosyl-L-methionine-binding positions include 38 to 40 (GVH), Glu-57, Phe-88, Asp-103, and His-110.

The protein belongs to the methyltransferase superfamily. RsmH family.

The protein localises to the cytoplasm. It carries out the reaction cytidine(1402) in 16S rRNA + S-adenosyl-L-methionine = N(4)-methylcytidine(1402) in 16S rRNA + S-adenosyl-L-homocysteine + H(+). Specifically methylates the N4 position of cytidine in position 1402 (C1402) of 16S rRNA. This Borreliella burgdorferi (strain ZS7) (Borrelia burgdorferi) protein is Ribosomal RNA small subunit methyltransferase H.